A 93-amino-acid chain; its full sequence is MICAVYKSRRKAESYLFVEKRNDFERVPEALMDMFGEPQLVMMLPIEKRDHLGFADIKKVRSELKEKGFYLQLPPPVVNLLEQHKKEIGFNPD.

The region spanning 1-85 is the YcgL domain; sequence MICAVYKSRR…PVVNLLEQHK (85 aa).

In Shewanella halifaxensis (strain HAW-EB4), this protein is YcgL domain-containing protein Shal_1837.